The primary structure comprises 474 residues: Glutamate--tRNA ligase (474 aa).

The short motif at 11 to 21 (PSPTGFLHIGG) is the 'HIGH' region element. A 'KMSKS' region motif is present at residues 240 to 244 (KLSKR). Position 243 (lysine 243) interacts with ATP.

The protein belongs to the class-I aminoacyl-tRNA synthetase family. Glutamate--tRNA ligase type 1 subfamily. As to quaternary structure, monomer.

The protein localises to the cytoplasm. The catalysed reaction is tRNA(Glu) + L-glutamate + ATP = L-glutamyl-tRNA(Glu) + AMP + diphosphate. Its function is as follows. Catalyzes the attachment of glutamate to tRNA(Glu) in a two-step reaction: glutamate is first activated by ATP to form Glu-AMP and then transferred to the acceptor end of tRNA(Glu). The sequence is that of Glutamate--tRNA ligase from Nitrobacter hamburgensis (strain DSM 10229 / NCIMB 13809 / X14).